Reading from the N-terminus, the 265-residue chain is Deoxyguanosine kinase, mitochondrial (265 aa).

Gly-32 to Thr-40 contacts ATP. Positions 57, 88, 99, and 106 each coordinate substrate. Glu-129 functions as the Proton acceptor in the catalytic mechanism. Residues Arg-130 and Asp-135 each contribute to the substrate site. Arg-190–Arg-194 contributes to the ATP binding site. A substrate-binding site is contributed by Glu-199. Glu-242–Phe-244 provides a ligand contact to ATP.

It belongs to the DCK/DGK family. In terms of assembly, homodimer.

Its subcellular location is the mitochondrion. The enzyme catalyses 2'-deoxyguanosine + ATP = dGMP + ADP + H(+). Phosphorylates deoxyguanosine in the mitochondrial matrix with high efficiency but shows very low activity against other deoxynucleosides. In Xenopus laevis (African clawed frog), this protein is Deoxyguanosine kinase, mitochondrial.